Consider the following 262-residue polypeptide: uncharacterized protein (262 aa).

3 consecutive transmembrane segments (helical) span residues 4–24 (LIVF…RFLG), 28–48 (VSRF…CLFR), and 62–82 (CYLA…SHIL). The stretch at 152-181 (EREARAQEHDRISAEVETITSACENLEAAM) forms a coiled coil.

It is found in the mitochondrion membrane. This is an uncharacterized protein from Arabidopsis thaliana (Mouse-ear cress).